Reading from the N-terminus, the 77-residue chain is Conotoxin S6.11 (77 aa).

The N-terminal stretch at methionine 1 to alanine 19 is a signal peptide. A propeptide spanning residues leucine 20–glutamate 50 is cleaved from the precursor. 3 cysteine pairs are disulfide-bonded: cysteine 51–cysteine 65, cysteine 58–cysteine 69, and cysteine 64–cysteine 74.

The protein belongs to the conotoxin O2 superfamily. As to expression, expressed by the venom duct.

It is found in the secreted. The protein is Conotoxin S6.11 of Conus striatus (Striated cone).